We begin with the raw amino-acid sequence, 289 residues long: Stress response regulator protein 1 (289 aa).

Residues 77 to 136 are disordered; it reads LDCTNSEMDEEDDFEDDEDDENLGLINPLHHKSSHGQISDYSPLTPFTEPPSASLSKPSF. The span at 83–98 shows a compositional bias: acidic residues; it reads EMDEEDDFEDDEDDEN. The segment covering 127-136 has biased composition (polar residues); it reads PSASLSKPSF. A Response regulatory domain is found at 163 to 281; sequence NFLIVDDNII…YDFVMDRIDE (119 aa). D214 carries the 4-aspartylphosphate modification.

In terms of biological role, required for stress adaptation, morphogenesis and virulence. The polypeptide is Stress response regulator protein 1 (SRR1) (Scheffersomyces stipitis (strain ATCC 58785 / CBS 6054 / NBRC 10063 / NRRL Y-11545) (Yeast)).